A 149-amino-acid chain; its full sequence is Putative pre-16S rRNA nuclease (149 aa).

Belongs to the YqgF nuclease family.

The protein localises to the cytoplasm. Could be a nuclease involved in processing of the 5'-end of pre-16S rRNA. The protein is Putative pre-16S rRNA nuclease of Synechococcus sp. (strain ATCC 27144 / PCC 6301 / SAUG 1402/1) (Anacystis nidulans).